The primary structure comprises 339 residues: Uroporphyrinogen decarboxylase (339 aa).

Substrate is bound by residues 21–25 (RQAGR), Asp71, Tyr147, Ser202, and His315.

It belongs to the uroporphyrinogen decarboxylase family. As to quaternary structure, homodimer.

Its subcellular location is the cytoplasm. It catalyses the reaction uroporphyrinogen III + 4 H(+) = coproporphyrinogen III + 4 CO2. Its pathway is porphyrin-containing compound metabolism; protoporphyrin-IX biosynthesis; coproporphyrinogen-III from 5-aminolevulinate: step 4/4. Functionally, catalyzes the decarboxylation of four acetate groups of uroporphyrinogen-III to yield coproporphyrinogen-III. This Helicobacter pylori (strain P12) protein is Uroporphyrinogen decarboxylase.